A 121-amino-acid chain; its full sequence is Apoptin (121 aa).

Disordered regions lie at residues 1–28 (MNAL…LETP) and 57–121 (LRSA…RIRL). Residues 58-70 (RSATADNSESTGF) show a composition bias toward polar residues. Basic and acidic residues predominate over residues 88–102 (RSCDPSEYRVSELKE).

This sequence belongs to the gyrovirus apoptin family.

Its subcellular location is the host nucleus. In terms of biological role, may act as transcriptional regulator. Induces apoptosis in infected cells. Element of infectious replication cycle. The polypeptide is Apoptin (VP3) (Gallus gallus (Chicken)).